We begin with the raw amino-acid sequence, 338 residues long: MREPAFWYRPRSPESQILRPLGALYGAITARRMALQGFDAGIPVICVGNYHVGGAGKTPTVLALTKLLRELGETPVVLSRGYGGRLQGPVMVDGARHIAADVGDEPLMMARDVPVVVARDRLDGVALAKSQGATVILMDDGFQNPRLLKDASLIVIDSERGIGNGKVFPAGPLRAPLKAQLARTDALVLIGDGRAANDVAAELAKRNKPELRARLKPDAASVAQLFGKRVFAFAGIGDPERFFRTLRASGIDVARTRRFDDHHMFSPEEIAALAAEAQREQLTLVTTEKDLARLRGSEGVPNGIVPFAVQLEFDDPAKLRQLISDHLYKARERRFGRR.

Residue 51–58 participates in ATP binding; the sequence is HVGGAGKT.

It belongs to the LpxK family.

It catalyses the reaction a lipid A disaccharide + ATP = a lipid IVA + ADP + H(+). The protein operates within glycolipid biosynthesis; lipid IV(A) biosynthesis; lipid IV(A) from (3R)-3-hydroxytetradecanoyl-[acyl-carrier-protein] and UDP-N-acetyl-alpha-D-glucosamine: step 6/6. Transfers the gamma-phosphate of ATP to the 4'-position of a tetraacyldisaccharide 1-phosphate intermediate (termed DS-1-P) to form tetraacyldisaccharide 1,4'-bis-phosphate (lipid IVA). This chain is Tetraacyldisaccharide 4'-kinase, found in Bradyrhizobium diazoefficiens (strain JCM 10833 / BCRC 13528 / IAM 13628 / NBRC 14792 / USDA 110).